Consider the following 417-residue polypeptide: MAQKEGGRTVPCCSRPKVAALTAGTLLLLTAIGAASWAIVAVLLRSDQEPLYPVQVSSADARLMVFDKTEGTWRLLCSSRSNARVAGLSCVEMGFLRALTHSELDVRTAGANGTSGFFCVDEGRLPHTQRLLEVISVCDCPRGRFLATICQDCGRRKLPVDRIVGGRDTSLGRWPWQVSLRYDGAHLCGGSLLSGDWVLTAAHCFPERNRVLSRWRVFAGAVAQASPHGLQLAVQAVVYHGGYLPFRDPNSEENSNDIALVHLSSPLPLTEYIQPVCLPAAGQALVDGKICTVTGWGNTQYYGQQAGVLQEARVPIISNDVCNGADFYGNQIKPKMFCAGYPEGGIDACQGDSGGPFVCEDSISRTPRWRLCGIVSWGTGCALAQKPGVYTKVSDFREWIFQAIKTHSEASGMVTQL.

The Cytoplasmic portion of the chain corresponds to 1–23; the sequence is MAQKEGGRTVPCCSRPKVAALTA. The chain crosses the membrane as a helical; Signal-anchor for type II membrane protein span at residues 24-44; it reads GTLLLLTAIGAASWAIVAVLL. Over 45 to 417 the chain is Extracellular; that stretch reads RSDQEPLYPV…SEASGMVTQL (373 aa). The SRCR domain maps to 54 to 151; it reads VQVSSADARL…RGRFLATICQ (98 aa). Cystine bridges form between cysteine 77/cysteine 140, cysteine 90/cysteine 150, cysteine 119/cysteine 138, cysteine 153/cysteine 277, cysteine 188/cysteine 204, cysteine 291/cysteine 359, cysteine 322/cysteine 338, and cysteine 349/cysteine 381. N-linked (GlcNAc...) asparagine glycosylation is present at asparagine 112. The region spanning 163–405 is the Peptidase S1 domain; that stretch reads IVGGRDTSLG…FREWIFQAIK (243 aa). Catalysis depends on charge relay system residues histidine 203 and aspartate 257. Serine 353 (charge relay system) is an active-site residue.

Belongs to the peptidase S1 family.

Its subcellular location is the membrane. It catalyses the reaction Cleavage after basic amino-acid residues, with Arg strongly preferred to Lys.. In terms of biological role, plays an essential role in cell growth and maintenance of cell morphology. May mediate the activating cleavage of HGF and MST1/HGFL. Plays a role in the proteolytic processing of ACE2. The polypeptide is Serine protease hepsin (HPN) (Pongo abelii (Sumatran orangutan)).